The sequence spans 750 residues: Cation-transporting P-type ATPase B (750 aa).

The HMA domain occupies 17–80 (RRIQLDVAGM…VIEQAGYRAT (64 aa)). The a metal cation site is built by cysteine 28 and cysteine 31. 6 helical membrane passes run 104–124 (LIVA…FAIV), 129–149 (FPGW…WAAW), 167–187 (ETLI…TIFV), 200–220 (AILH…VFVL), 360–380 (IAAV…ASWL), and 389–409 (AFSV…GLAT). Aspartate 445 functions as the 4-aspartylphosphate intermediate in the catalytic mechanism. 6 helical membrane passes run 471-491 (VLAL…TAIV), 500-520 (VADF…EHHV), 547-567 (SRGE…AVAI), 663-683 (VAIG…VPVA), 693-713 (TIRI…PIAS), and 715-735 (GLLN…FVVS).

It belongs to the cation transport ATPase (P-type) (TC 3.A.3) family. Type IB subfamily.

It localises to the cell membrane. The enzyme catalyses ATP + H2O = ADP + phosphate + H(+). This chain is Cation-transporting P-type ATPase B (ctpB), found in Mycobacterium leprae (strain TN).